The chain runs to 172 residues: General stress protein 18 (172 aa).

Residues 3–171 enclose the PfpI endopeptidase domain; sequence KKIAVVLTYY…FNRESLALLE (169 aa). Cysteine 104 serves as the catalytic Nucleophile. Histidine 105 is a catalytic residue.

Belongs to the peptidase C56 family.

Functions in the protection against aldehyde-stress, possibly by degrading damaged proteins. The protein is General stress protein 18 (yfkM) of Bacillus subtilis (strain 168).